A 117-amino-acid chain; its full sequence is Phosphoribosyl-ATP pyrophosphatase (117 aa).

The protein belongs to the PRA-PH family.

Its subcellular location is the cytoplasm. The catalysed reaction is 1-(5-phospho-beta-D-ribosyl)-ATP + H2O = 1-(5-phospho-beta-D-ribosyl)-5'-AMP + diphosphate + H(+). It participates in amino-acid biosynthesis; L-histidine biosynthesis; L-histidine from 5-phospho-alpha-D-ribose 1-diphosphate: step 2/9. The polypeptide is Phosphoribosyl-ATP pyrophosphatase (Rhodospirillum rubrum (strain ATCC 11170 / ATH 1.1.1 / DSM 467 / LMG 4362 / NCIMB 8255 / S1)).